The following is a 579-amino-acid chain: Putative truncated flagellar export/assembly protein LfhA (579 aa).

Helical transmembrane passes span 86 to 106 (AIAG…IGIF), 124 to 144 (IGDG…AAII), and 177 to 197 (FVLA…SALL).

The protein belongs to the FHIPEP (flagella/HR/invasion proteins export pore) family.

It is found in the cell inner membrane. This Escherichia coli (strain K12) protein is Putative truncated flagellar export/assembly protein LfhA.